A 67-amino-acid polypeptide reads, in one-letter code: Conotoxin reg3.8 (67 aa).

Residues 1 to 22 (MMSKLGVLLTICLLLFPLSVLP) form the signal peptide. The propeptide occupies 23-50 (LDGDQLADQPARHAQSAERNARFHPVKR). Cystine bridges form between Cys-51-Cys-65, Cys-52-Cys-63, and Cys-57-Cys-66. Cys-66 carries the post-translational modification Cysteine amide.

This sequence belongs to the conotoxin M superfamily. As to expression, expressed by the venom duct.

The protein resides in the secreted. The sequence is that of Conotoxin reg3.8 from Conus regius (Crown cone).